A 68-amino-acid polypeptide reads, in one-letter code: MPKHEFSVDMTCEGCSNAVTRVLNKLGGVQFDIDLPNKKVCINSEHSVDTLLETLGKTGKAVSYLGPK.

In terms of domain architecture, HMA spans 1 to 63 (MPKHEFSVDM…TLGKTGKAVS (63 aa)). The Cu cation site is built by Cys-12 and Cys-15. Ser-47 carries the phosphoserine modification. Lys-60 is modified (N6-acetyllysine).

It belongs to the ATX1 family. In terms of assembly, homodimer. Interacts with ATP7B. Interacts with ATP7A. Interacts (via dimer form) with SLC31A1 (via C-terminal domain); this interaction improves ATOX1 stability and controls intracellular Cu(I) levels.

Functionally, binds and deliver cytosolic copper to the copper ATPase proteins. May be important in cellular antioxidant defense. The sequence is that of Copper transport protein ATOX1 from Bos taurus (Bovine).